We begin with the raw amino-acid sequence, 220 residues long: Guanylate kinase (220 aa).

Positions 11 to 190 constitute a Guanylate kinase-like domain; the sequence is GVLFVLSSPS…CYGEVMAILR (180 aa). An ATP-binding site is contributed by 18-25; sequence SPSGAGKT.

This sequence belongs to the guanylate kinase family.

It is found in the cytoplasm. The enzyme catalyses GMP + ATP = GDP + ADP. Essential for recycling GMP and indirectly, cGMP. In Sphingopyxis alaskensis (strain DSM 13593 / LMG 18877 / RB2256) (Sphingomonas alaskensis), this protein is Guanylate kinase.